The following is a 496-amino-acid chain: Cytochrome P450 71D181 (496 aa).

A helical; Signal-anchor for type II membrane protein transmembrane segment spans residues 1-21 (MDISILWVAIILVISSYFIFM). Cys-435 contacts heme. Residues 471 to 496 (MSETPGLSGPRKNPLIMVPTIHNPTS) are disordered.

This sequence belongs to the cytochrome P450 family. Heme is required as a cofactor.

It localises to the membrane. The catalysed reaction is gamma-terpinene + 2 reduced [NADPH--hemoprotein reductase] + 2 O2 = carvacrol + 2 oxidized [NADPH--hemoprotein reductase] + 3 H2O + 2 H(+). It catalyses the reaction (4S)-limonene + reduced [NADPH--hemoprotein reductase] + O2 = (1S,5R)-carveol + oxidized [NADPH--hemoprotein reductase] + H2O + H(+). The enzyme catalyses (4R)-limonene + reduced [NADPH--hemoprotein reductase] + O2 = (1R,5S)-carveol + oxidized [NADPH--hemoprotein reductase] + H2O + H(+). It carries out the reaction alpha-terpinene + 2 reduced [NADPH--hemoprotein reductase] + 2 O2 = carvacrol + 2 oxidized [NADPH--hemoprotein reductase] + 3 H2O + 2 H(+). It participates in secondary metabolite biosynthesis; terpenoid biosynthesis. In terms of biological role, involved in the biosynthesis of phenolic monoterpenes natural products thymol and carvacrol which have a broad range of biological activities acting as antimicrobial compounds, insecticides, antioxidants and pharmaceutical agents. Catalyzes the C2-hydroxylation of gamma-terpinene and alpha-terpinene to produce carvacrol. Also mediates the C6-hydroxylation of (4S)-limonene and (4R)-limonene to form carveol. This Thymus vulgaris (Thyme) protein is Cytochrome P450 71D181.